The chain runs to 372 residues: Methylthioribose-1-phosphate isomerase 2 (372 aa).

Asp254 functions as the Proton donor in the catalytic mechanism.

Belongs to the eIF-2B alpha/beta/delta subunits family. MtnA subfamily.

Its subcellular location is the cytoplasm. The protein resides in the nucleus. It catalyses the reaction 5-(methylsulfanyl)-alpha-D-ribose 1-phosphate = 5-(methylsulfanyl)-D-ribulose 1-phosphate. The protein operates within amino-acid biosynthesis; L-methionine biosynthesis via salvage pathway; L-methionine from S-methyl-5-thio-alpha-D-ribose 1-phosphate: step 1/6. In terms of biological role, catalyzes the interconversion of methylthioribose-1-phosphate (MTR-1-P) into methylthioribulose-1-phosphate (MTRu-1-P). This Trypanosoma cruzi (strain CL Brener) protein is Methylthioribose-1-phosphate isomerase 2.